Reading from the N-terminus, the 126-residue chain is Large ribosomal subunit protein eL18 (126 aa).

The protein belongs to the eukaryotic ribosomal protein eL18 family.

The polypeptide is Large ribosomal subunit protein eL18 (Methanosarcina mazei (strain ATCC BAA-159 / DSM 3647 / Goe1 / Go1 / JCM 11833 / OCM 88) (Methanosarcina frisia)).